Reading from the N-terminus, the 769-residue chain is MRTVWSPLAAALAALGMSTYKRATLDEEDLVDSLSEGDVYPNGLQVNFRSSRSGQRCWAARTSVEKRLVVLVTLLAAGLVACLAALGIQYQTRTPPVCLTEACVSVTSSILNSMDPTVDPCQDFFSYACGGWIKANPVPDGHSRWGTFSNLWEHNQAVIKHLLENATASVSEAERKAQVYYRACMNETRIEELRAKPLMELIEKLGGWNITGPWAKDNFQDTLQVVTAHYRTSPFFSVYVSADSKNSNSNVIQVDQSGLGLPSRDYYLNKTENEKVLTGYLNYMVQLGKLLGGGDEDAIRPQMQQILDFETALANITIPQEKRRDEELIYHKVTAAELQTLAPAINWLPFLNTIFYPVEINESEPIVVYDKEYLRQVSTLINNTDKCLLNNYMMWNLVRKTSSFLDQRFQDADEKFMEVMYGTKKTCIPRWKFCVSDTENNLGFALGPMFVKATFAEDSKNIASEIIMEIKKAFEESLSTLKWMDEETRRSAKEKADAIYNMIGYPNFIMDPKELDKVFNDYTAVPDLYFENAMRFFNFSWRVTADQLRKAPNRDQWSMTPPMVNAYYSPTKNEIVFPAGILQAPFYTRSSPNALNFGGIGVVVGHELTHAFDDQGREYDKDGNLRPWWKNSSVEAFKQQTECMVQQYSNYSVNGEPVNGRHTLGENIADNGGLKAAYRAYQNWVKKNGAEQTLPTLGLTSNQLFFLGFAQVWCSVRTPESSHEGLITDPHSPSRFRVIGSLSNSKEFSEHFRCPPGSPMNPHHKCEVW.

Over 1–67 (MRTVWSPLAA…WAARTSVEKR (67 aa)) the chain is Cytoplasmic. T24 is modified (phosphothreonine). A helical; Signal-anchor for type II membrane protein transmembrane segment spans residues 68–88 (LVVLVTLLAAGLVACLAALGI). Residues 89–769 (QYQTRTPPVC…MNPHHKCEVW (681 aa)) are Extracellular-facing. The region spanning 97 to 769 (VCLTEACVSV…MNPHHKCEVW (673 aa)) is the Peptidase M13 domain. Disulfide bonds link C98-C103, C121-C754, C129-C714, C184-C434, and C643-C766. N-linked (GlcNAc...) asparagine glycans are attached at residues N165, N186, N209, N269, N315, N361, N382, and N538. H606 is a Zn(2+) binding site. E607 is an active-site residue. H610 contacts Zn(2+). Residues N631 and N650 are each glycosylated (N-linked (GlcNAc...) asparagine). Position 666 (E666) interacts with Zn(2+). Catalysis depends on D670, which acts as the Proton donor.

The protein belongs to the peptidase M13 family. As to quaternary structure, homodimer; disulfide-linked. Interacts with PPP1R16B. Interacts with TSPAN8; this interaction recruits the endothelin converting enzyme ECE1 to tetraspanin-enriched microdomains and positively modulates its enzymatic activity. Requires Zn(2+) as cofactor.

The protein resides in the cell membrane. It catalyses the reaction Hydrolysis of the 21-Trp-|-Val-22 bond in big endothelin to form endothelin 1.. Its activity is regulated as follows. Inhibited by phosphoramidon. Converts big endothelin-1 to endothelin-1. The polypeptide is Endothelin-converting enzyme 1 (Ece1) (Mus musculus (Mouse)).